Reading from the N-terminus, the 333-residue chain is FAD-dependent monooxygenase pytG (333 aa).

The helical transmembrane segment at 6–26 threads the bilayer; sequence LPNVSVAIIGAGIGGLTLGAF. 2 residues coordinate FAD: glutamate 38 and arginine 109. The N-linked (GlcNAc...) asparagine glycan is linked to asparagine 303.

This sequence belongs to the paxM FAD-dependent monooxygenase family. FAD is required as a cofactor.

Its subcellular location is the membrane. It functions in the pathway secondary metabolite biosynthesis. FAD-dependent monooxygenase; part of the gene cluster that mediates the biosynthesis of pyranterreones, a family of antioxidative compounds. The first step of pyranonigrins biosynthesis is performed by the hybrid PKS-NRPS synthetase pytA that condenses 4 malonyl-CoA units ato the acetyl starter unit by the modular PKS of pytA. The acyl chain is then connected to an L-serine through the amide bond by the modular NRPS of pytA. A tetramic acid is formed and released from the PKS-NRPS pytA to give pyranterreone 5 with the help of the thioesterase pytI. Pyranterreone 5 could be methylated by pytC to afford pyranterreone 6. Both pyranterreones 5 and 6 are subsequently oxidized by the FAD-linked oxidoreductase pytB and the cytochrome P450 monooxygenase pytD to form the fused gamma-pyrone core, resulting in pyranterreones 7 and 11, respectively. The hydroxy group at C-8 of pyranterreones 7 and 11 are dehydrated by the aspartyl protease pytH to form a delta-7 double bond to give pyranterreones 3 and 1, 2 accordingly. The exo-methylene of pyranterreone 3 could be reduced into a pendant methyl by reductase pytE to provide pyranterreone 4, also known as cordylactam. Pyranterreone 4 can be reconverted to pyranterreone 3 through pytB-catalyzed dehydrogenation or further oxidized to pyranterreones 9 and 10. The sequence is that of FAD-dependent monooxygenase pytG from Aspergillus terreus (strain NIH 2624 / FGSC A1156).